The chain runs to 410 residues: MKAEIIAIGTEILLGDIINSNAQYLAQELAALGIDMYYQQVVGDNEIRIMHAFDEAYSRSDIIITTGGLGPTDDDITKEVAAKYFNKELIQDENSIKKIKDYFKFRERVMTKNNLKQGLIPEGATVIKNNNGTAPGVIIEDDNKIMIILPGPPKEMKPMFEESVKPYLQEKSDSILVSRVVKILGIGESAVAEEIKDLIDAQTNPTIAPYAKDVGVMLRITAKAETKDEALKLIEPIEEEIKNRLGDNVYATEDINIEEVVARLLIEKKLTISTAESCTGGMIASYLINYPGISEVFLEGAVTYSNEAKHNRLGVNNDILNKYGAVSEETAREMAIGIAKTANTDVSIVTTGIAGPEGGTLEKPVGLVFIGVYVQGKVTIQKCLFKGDRNKVRLQATITGLDMLRRILIK.

This sequence belongs to the CinA family.

This Clostridium beijerinckii (strain ATCC 51743 / NCIMB 8052) (Clostridium acetobutylicum) protein is Putative competence-damage inducible protein.